The primary structure comprises 2507 residues: MAEPIAVVGMAMRLPGNVRNGEEFWQLLVEKRNGLCDVPQDRYNVNGFHDPSGKPSTFRMNKGYFLQDVDIAQFDTSFFSLSKAELERLDPQQRQLLEVAYECMEDAGATSWRGSNTGCYVGVFGDDWQDLNAKETLHKGGYRVTGYDDFVLGNRISYEFDLHGPSMTVKTGWLIFSPTMTLALSDQGVLSPSGICKTFDATADGYGRGEAVNAIYIKRLSQAIEDGDSIRAIIRGTSVNCDGRTQAMLTPSPTAQEALIRRAYEQAGIQDMSRTAMVECHGTGTSVGDPLEATAVANCFGDKGIYITSVKPNVGHSEGAAGLTSLIKAILAIEHRQIPPNIFFESPNPAIPFSKCKLRVPVKTEEWPDARAERVSVNSFGIGGVNAHVIVESLREYQNHDRGLSNGSTTSSSPAGDMTPTDSDGFEDVGSSESSTVDEFANSDGVHSNGHQDVDGSAESKASDAKLESNDTPQSRSTPSNGDQTSHTVGRRNGYSGDDVEFPERPHLLLFSATSEPALKDTVKTYQEFLPTSHISLKDVAYTLALRRDHKPHRAFAIAGNKSSIELSQLETVKTPARIAWVFTGQGAQWPEMGAELIDTNPVFQATIRGLDAFLAGLPSPPPWTIESELRKTAGDSRVQKAEFGHPLSIAVQIGLIDVLKSWGIKPDLVLGHSSGEMAAAYASGSITAKAAMAAATFRGTTSTSGTAEKRGSMAAIGLGAHEMAPYMEPGVVVACENSQCSVTISGDSEQVEKVVQNVKTQREGVLARFLRVEKAFHSHHMLEYGPLYEEHLQPFVSSTSPLIPFYSSVTGKRLSGDGCLGPAYWRRNMESPVLFNTALRSAMTAYEGRLVLIEIGPHPALKGPIGQILRDMGRSADVHVGTLQRDKGCDESLLQLAGKLFQQDVNVDFSHVLLPSGRHVANLPRYPWKRDNSHWAESRMTREWRFREHAPHELLGSRVTEISNEPCWRTKLALEDVSWLSGHEVGGQVVFPGAGYISMVGEAIRQLHEELAYSLKNVSIKAGLVLEHGKTVEIVTSLSPVATDSSDEASWYTFSISSYDGTKWVKHCVGEARASVDKAAQLSVQSPKGYARTVDANEWYNILNRVGFNYTGLFRGLGSITAAPGDNRAAASVPSLSQAGKFAMHPAVMDQCFQLFTVSAYGGLGRNCKNIAVPTFIEEIIVRPTAHDLRVGATIHTLERGSFVGDLVAEQAGELQLSLKGFKASALTRSDDEDESLPLITRFEWRPHAHFVSLADYLHPRTHIPREWPLFEEMMLLCAIDHLETIKLTGETQPHLRKFFSWMQGQVDKYRSGRNLFVANDRGLLELTKAQRLGRIAEIAADGEKSQYPAFCIAIHRLFQTAESIFSGETHPLHVLMKDDVLTEFYAVGDELNYATALRVLGHTNPRLRILEVGAGTGGTTVKVLKALTSSTGERLYSTYTYTDISAGFMASAKERFSEVEGLQYATLDISQDPSEQGYLEGSYDLIIGSNVIHATPNLNVSLSHLRRLLSPGGKLFLQELCPDAKYVNYVMGFLPGWWLGDGDNRPDEPYISADRWAKEMVAAGFAEPEAMVIDGITPYQQSAGIIASPACETSKPLAVSLLSHSMDGAYVAEAKRVLEDLGVAVDVVTFGQPLPSHDVVSLLDLQASTVHDLTEPSFKTLVAQLQALDLDAKVIWATRSAQVACTDPRTAMSLGLTRTARSELSVKLFTVEIDDKTNHLAASKCLVDILMRRHSPQLDAESMDPDWEYAVVDGQILVPRMHWQTMAAAFERTNGDDSRPTEKHLSVKTPGLLHTMGWSQSERAPLEHGQVTVQTRAIGLNFRDVLIALGVLDNSTREIGLEGSGVVTEVGPGVEKLQVGDRVMYMSSGCFTTHITLSQTLCVKLDDGLTFEQGAALPCVYATAAMALVDKANLQPGQTILIHSACGGVGLAAIQIAQMLGGEVYCTVGNEDKVRYLMDNHNIPRHRIFNSRDTSFLRDVMAVTDNRGVDVVLNSLSGELLHASWRCVAEFGTMIEIGKRDFRRRAKLSMEAFEANRTFVGLDLWQVSQVRPEQVARLLERCIKWMQAGSIKPGVIARVWDAEQVQDAFRFMQGGRHIGKIIVKMPQDSSSLESTKERPSPSLRHDRSYLLVGGLGGLGRAIATWMAENGARHLIFLSRSARQGPQLASFVEELAAQGCEVQLVAGSVSCPDDVKRAVDGASKPIAGVMNLSMVLRDISLSDMTFADWTTAVAPKVQGTWNLHEAITSELDFFILCSSYSGIVGQWGQANYAAANTFLDAFVQYRHHKGLAASVIDIGVMGEVGFVSKNKDILGLFQKSGMRILKEQDLLDATNLAIQRSKPSRAQVSDGCFDSPGQILLGLVTSVPIASPNNRVVWKNDIRMSIYHNINGGKDSASSATAELDDITTLLKSAASDPSVLQDEESTVIIATAIASALANFLIKEEGSIKVEDSPEHAGLDSLVAMELRNWIRQRFGVDTTVMTIVQSTSIMSLGDYIRTALVKRS.

One can recognise a Ketosynthase family 3 (KS3) domain in the interval 2–393 (AEPIAVVGMA…GVNAHVIVES (392 aa)). The tract at residues 399-501 (NHDRGLSNGS…RNGYSGDDVE (103 aa)) is disordered. Composition is skewed to polar residues over residues 405–414 (SNGSTTSSSP) and 470–488 (NDTP…TSHT). Positions 581–900 (WVFTGQGAQW…DESLLQLAGK (320 aa)) are malonyl-CoA:ACP transacylase (MAT) domain. The N-terminal hotdog fold stretch occupies residues 953-1080 (HELLGSRVTE…GEARASVDKA (128 aa)). The segment at 953-1232 (HELLGSRVTE…FKASALTRSD (280 aa)) is dehydratase (DH) domain. Residues 953–1234 (HELLGSRVTE…ASALTRSDDE (282 aa)) form the PKS/mFAS DH domain. His984 acts as the Proton acceptor; for dehydratase activity in catalysis. The C-terminal hotdog fold stretch occupies residues 1092-1234 (ARTVDANEWY…ASALTRSDDE (143 aa)). The Proton donor; for dehydratase activity role is filled by Asp1151. Positions 1402–1570 (LGHTNPRLRI…EMVAAGFAEP (169 aa)) are methyltransferase (CMet) domain. The interval 1793–2105 (GLLHTMGWSQ…GGRHIGKIIV (313 aa)) is enoyl reductase (ER) (ER) domain. A ketoreductase (KR) domain region spans residues 2130–2303 (SYLLVGGLGG…ASVIDIGVMG (174 aa)). The region spanning 2425–2503 (EESTVIIATA…SLGDYIRTAL (79 aa)) is the Carrier domain. Ser2463 is modified (O-(pantetheine 4'-phosphoryl)serine).

Its pathway is secondary metabolite biosynthesis. Its function is as follows. Highly reducing polyketide synthase; part of the gene cluster that mediates the biosynthesis of the lipopeptide antibiotics leucinostatins that show extensive biological activities, including antimalarial, antiviral, antibacterial, antifungal, and antitumor activities, as well as phytotoxic. Leucinostatin A contains nine amino acid residues, including the unusual amino acid 4-methyl-L-proline (MePro), 2-amino-6-hydroxy-4-methyl-8-oxodecanoic acid (AHyMeOA), 3-hydroxyleucine (HyLeu), alpha-aminoisobutyric acid (AIB), beta-Ala, a 4-methylhex-2-enoic acid at the N-terminus as well as a N1,N1-dimethylpropane-1,2-diamine (DPD) at the C-terminus. The biosynthesis of leucinostatins is probably initiated with the assembly of 4-methylhex-2-enoic acid by a reducing PKS. Two reducing polyketide synthases, lcsB and lcsC, have been identified in the cluster and it is not clear which is the one that assembles 4-methylhex-2-enoic acid since both contain KS, AT, DH, cMT, ER, KR and ACP domains. The polyketide residue might be transferred to the NRPS lcsA, mediated by two additional enzymes, the acyl-CoA ligase lcsD and the thioesterase lcsE. The linear polyketide carboxylic acid, which is released from PKS, is converted to a CoA thioester by lcsD, and then lcsE hydrolyzes the thiol bond and shuttles the polyketide intermediate to lcsA. The C domain of the first module catalyzed the condensation of 4-methylhex-2-enoic acid and MePro carried by domain A1, followed by successive condensations of nine amino acids to trigger the elongation of the linear peptide. A5 and A6 domains of lcsA are proposed to incorporate leucine, A2 AHyMeOA, and A3 incorporates HyLeu. A4, A7 and A8 incorporate AIB. The AHyMeOA in leucinostatin A activated by the A2 might be produced by the second PKS (lcsB or lcsC) present within the cluster. The MePro is probably produced via leucine cyclization and may originate from a separate pathway, independent of the cluster. Another nonproteinogenic amino acid, beta-Ala, could be produced by an aspartic acid decarboxylase also localized outside of the cluster. Two candidates are VFPBJ_01400 and VFPBJ_10476. The final peptide scaffold may be released by the NAD(P)H-dependent thioester reductase (TE) at the C-terminal region of lcsA. Transamination of the lcsA product by the transaminase lcsP may produce DPD at the C-terminus. Further hydroxylation steps performed alternatively by the cytochrome P450 monooxygenases lcsI, lcsK andr lcsN then yield the non-methylated leucinostatins precursor. It is also possible that leucines can be hydroxylated prior to their incorporation into the peptide. Varying extents of methylation then lead to the formation of leucinostatins A and B. The sequence is that of Highly reducing polyketide synthase lcsB from Purpureocillium lilacinum (Paecilomyces lilacinus).